A 463-amino-acid polypeptide reads, in one-letter code: uncharacterized protein (463 aa).

This is an uncharacterized protein from Saccharomyces cerevisiae (strain ATCC 204508 / S288c) (Baker's yeast).